We begin with the raw amino-acid sequence, 959 residues long: Probable LRR receptor-like serine/threonine-protein kinase At5g37450 (959 aa).

The signal sequence occupies residues 1 to 24 (MKEMMGVVGIILVVSSCCLSLLDA). The Extracellular segment spans residues 25-565 (QEITHPTDVS…SGMSIGVSVG (541 aa)). N-linked (GlcNAc...) asparagine glycans are attached at residues Asn-62, Asn-88, Asn-102, and Asn-123. 9 LRR repeats span residues 79–100 (VKELRLLNMNLTGQLAPELGLL), 101–124 (SNLTILNFMWNDLTGQIPPELGNL), 125–148 (THLIFLLLSGNQLTGSLPQELGSL), 149–172 (SNLLILQIDYNEISGKLPTSLANL), 173–198 (KKLKHFHMNNNSITGQIPPEYSTLTN), 200–220 (LHFLMDNNKLTGNLPPELAQM), 221–244 (PSLRILQLDGSNFDGTEIPSSYGS), 246–268 (PNLVKLSLRNCNLEGPIPDLSKS), and 269–292 (LVLYYLDISSNKLTGEIPKNKFSA). N-linked (GlcNAc...) asparagine glycosylation is present at Asn-182. N-linked (GlcNAc...) asparagine glycans are attached at residues Asn-293, Asn-311, Asn-327, Asn-358, Asn-369, and Asn-510. LRR repeat units follow at residues 294–314 (ITTINLYNNLLSGSIPSNFSG), 315–338 (LPRLQRLQVQNNNLSGEIPVIWEN), and 341–366 (LKAEEKLILDLRNNMFSNVSSVLLNP). A helical transmembrane segment spans residues 566-586 (IIIGAIAFFLVLSSLALVFFI). Topologically, residues 587-959 (KRSKRKRKTR…SGVIPSIAPR (373 aa)) are cytoplasmic. Residues 631 to 906 (FSDLSQIGRG…RELENIYGLI (276 aa)) form the Protein kinase domain. ATP is bound by residues 637–645 (IGRGGYGKV) and Lys-659. Asp-755 (proton acceptor) is an active-site residue.

Belongs to the protein kinase superfamily. Ser/Thr protein kinase family.

The protein resides in the membrane. It catalyses the reaction L-seryl-[protein] + ATP = O-phospho-L-seryl-[protein] + ADP + H(+). It carries out the reaction L-threonyl-[protein] + ATP = O-phospho-L-threonyl-[protein] + ADP + H(+). This chain is Probable LRR receptor-like serine/threonine-protein kinase At5g37450, found in Arabidopsis thaliana (Mouse-ear cress).